A 435-amino-acid chain; its full sequence is Serine/threonine-protein kinase 40 (435 aa).

The Protein kinase domain occupies 35–332 (FILGPRLGNS…DVLEALSAII (298 aa)). ATP-binding positions include 41–49 (LGNSPVPSI) and Lys-66. The Proton acceptor role is filled by Asp-197.

The protein belongs to the protein kinase superfamily. CAMK Ser/Thr protein kinase family.

It localises to the nucleus. It is found in the cytoplasm. The enzyme catalyses L-seryl-[protein] + ATP = O-phospho-L-seryl-[protein] + ADP + H(+). It catalyses the reaction L-threonyl-[protein] + ATP = O-phospho-L-threonyl-[protein] + ADP + H(+). Its function is as follows. May be a negative regulator of NF-kappa-B and p53-mediated gene transcription. In Rattus norvegicus (Rat), this protein is Serine/threonine-protein kinase 40 (Stk40).